The primary structure comprises 433 residues: D-amino acid dehydrogenase (433 aa).

An FAD-binding site is contributed by 3–17; the sequence is VLVLGSGVIGTASAY.

This sequence belongs to the DadA oxidoreductase family. The cofactor is FAD.

It catalyses the reaction a D-alpha-amino acid + A + H2O = a 2-oxocarboxylate + AH2 + NH4(+). Its pathway is amino-acid degradation; D-alanine degradation; NH(3) and pyruvate from D-alanine: step 1/1. Its function is as follows. Oxidative deamination of D-amino acids. This is D-amino acid dehydrogenase from Pseudomonas putida (strain W619).